A 494-amino-acid chain; its full sequence is Protein transport protein Sec61 subunit alpha (494 aa).

A run of 10 helical transmembrane segments spans residues 36-56 (LWTS…LYGI), 79-99 (LMEL…LLAG), 122-142 (LLGI…GMYG), 147-167 (LGAG…IIVI), 177-197 (YGIG…SIVW), 249-269 (LLAT…QVEL), 294-314 (MPII…QILY), 359-379 (IVSD…SCAL), 426-446 (AAFG…MGAI), and 450-470 (TGIL…LLAV).

This sequence belongs to the SecY/SEC61-alpha family. In terms of assembly, heterotrimeric complex composed of SEC61-alpha, SEC61-beta and SEC61-gamma.

The protein localises to the endoplasmic reticulum membrane. Its function is as follows. Appears to play a crucial role in the insertion of secretory and membrane polypeptides into the ER. It is required for assembly of membrane and secretory proteins. This Pyrenomonas salina protein is Protein transport protein Sec61 subunit alpha.